A 481-amino-acid chain; its full sequence is Cysteine protease atg-4.1 (481 aa).

Cys-112 functions as the Nucleophile in the catalytic mechanism. Residues Asp-313 and His-315 contribute to the active site. The segment at 462–481 (DVHTEEEDADEDNDDDVANA) is disordered.

This sequence belongs to the peptidase C54 family.

The protein localises to the cytoplasm. The enzyme catalyses [protein]-C-terminal L-amino acid-glycyl-phosphatidylethanolamide + H2O = [protein]-C-terminal L-amino acid-glycine + a 1,2-diacyl-sn-glycero-3-phosphoethanolamine. Its function is as follows. Cysteine protease required for autophagy. Cleaves the C-terminal amino acid of ATG8 family proteins lgg-1, to reveal a C-terminal glycine. Exposure of the glycine at the C-terminus is essential for ATG8 proteins conjugation to phosphatidylethanolamine (PE) and insertion to membranes, which is necessary for autophagy. Its cleavage activity is functionally redundant to atg-4.2, but it cleaves lgg-1 precursors more efficiently than atg-4.2. Acts redundantly with atg-4.2 to promote the lgg-1 delipidation to release the protein from membranes, which facilitates multiple events during macroautophagy. Unlike atg-4.2 does not seem to be required for autophagosome maturation. This chain is Cysteine protease atg-4.1, found in Caenorhabditis elegans.